Consider the following 239-residue polypeptide: Large ribosomal subunit protein uL2 (239 aa).

The disordered stretch occupies residues Val200–Lys239. Over residues Pro222–Lys239 the composition is skewed to basic residues.

It belongs to the universal ribosomal protein uL2 family. As to quaternary structure, part of the 50S ribosomal subunit. Forms a bridge to the 30S subunit in the 70S ribosome.

One of the primary rRNA binding proteins. Required for association of the 30S and 50S subunits to form the 70S ribosome, for tRNA binding and peptide bond formation. It has been suggested to have peptidyltransferase activity; this is somewhat controversial. Makes several contacts with the 16S rRNA in the 70S ribosome. This is Large ribosomal subunit protein uL2 from Thermococcus gammatolerans (strain DSM 15229 / JCM 11827 / EJ3).